The sequence spans 147 residues: Transthyretin (147 aa).

Positions 1–20 (MASHRLLLLCLAGLVFVSEA) are cleaved as a signal peptide. Cys-30 carries the post-translational modification Sulfocysteine. Lys-35 is an L-thyroxine binding site. Position 62 is a 4-carboxyglutamate; in a patient with Moyamoya disease (Glu-62). Ser-72 carries the post-translational modification Phosphoserine. Glu-74 contacts L-thyroxine. Asn-118 carries N-linked (GlcNAc...) asparagine glycosylation. Ser-137 serves as a coordination point for L-thyroxine.

Belongs to the transthyretin family. Homotetramer. Dimer of dimers. In the homotetramer, subunits assemble around a central channel that can accommodate two ligand molecules. Interacts with RBP4. In terms of processing, not glycosylated under normal conditions. Following unfolding, caused for example by variant AMYLD1 'Gly-38', the cryptic Asn-118 site is exposed and glycosylated by STT3B-containing OST complex, leading to its degradation by the ER-associated degradation (ERAD) pathway. Post-translationally, sulfonation of the reactive cysteine Cys-30 enhances the stability of the native conformation of TTR, avoiding misassembly of the protein leading to amyloid formation. As to expression, detected in serum and cerebrospinal fluid (at protein level). Highly expressed in choroid plexus epithelial cells. Detected in retina pigment epithelium and liver.

It is found in the secreted. The protein resides in the cytoplasm. Functionally, thyroid hormone-binding protein. Probably transports thyroxine from the bloodstream to the brain. In Homo sapiens (Human), this protein is Transthyretin (TTR).